Here is a 149-residue protein sequence, read N- to C-terminus: Urease accessory protein UreE (149 aa).

It belongs to the UreE family.

It is found in the cytoplasm. Involved in urease metallocenter assembly. Binds nickel. Probably functions as a nickel donor during metallocenter assembly. The chain is Urease accessory protein UreE from Prochlorococcus marinus (strain MIT 9301).